The primary structure comprises 530 residues: GATA zinc finger domain-containing protein 4 (530 aa).

2 disordered regions span residues 1–27 (MSIN…FWDN) and 212–386 (STVV…INNN). 3 stretches are compositionally biased toward low complexity: residues 7–17 (NNNKNNNNKNN), 216–290 (SNSP…FNNN), and 299–386 (NSNN…INNN). A GATA-type zinc finger spans residues 494–518 (CSMCNIKESISWIKTMVNGQLCNAC).

In Dictyostelium discoideum (Social amoeba), this protein is GATA zinc finger domain-containing protein 4 (gtaD).